We begin with the raw amino-acid sequence, 331 residues long: Beta-hexosaminidase (331 aa).

Residues aspartate 60, arginine 68, arginine 133, and lysine 163–histidine 164 each bind substrate. Histidine 176 functions as the Proton donor/acceptor in the catalytic mechanism. The active-site Nucleophile is aspartate 247.

Belongs to the glycosyl hydrolase 3 family. NagZ subfamily.

It is found in the cytoplasm. It carries out the reaction Hydrolysis of terminal non-reducing N-acetyl-D-hexosamine residues in N-acetyl-beta-D-hexosaminides.. The protein operates within cell wall biogenesis; peptidoglycan recycling. Its function is as follows. Plays a role in peptidoglycan recycling by cleaving the terminal beta-1,4-linked N-acetylglucosamine (GlcNAc) from peptide-linked peptidoglycan fragments, giving rise to free GlcNAc, anhydro-N-acetylmuramic acid and anhydro-N-acetylmuramic acid-linked peptides. In Xanthomonas campestris pv. campestris (strain B100), this protein is Beta-hexosaminidase.